The sequence spans 251 residues: Imidazole glycerol phosphate synthase subunit HisF (251 aa).

Catalysis depends on residues D12 and D131.

It belongs to the HisA/HisF family. As to quaternary structure, heterodimer of HisH and HisF.

It localises to the cytoplasm. It catalyses the reaction 5-[(5-phospho-1-deoxy-D-ribulos-1-ylimino)methylamino]-1-(5-phospho-beta-D-ribosyl)imidazole-4-carboxamide + L-glutamine = D-erythro-1-(imidazol-4-yl)glycerol 3-phosphate + 5-amino-1-(5-phospho-beta-D-ribosyl)imidazole-4-carboxamide + L-glutamate + H(+). The protein operates within amino-acid biosynthesis; L-histidine biosynthesis; L-histidine from 5-phospho-alpha-D-ribose 1-diphosphate: step 5/9. Functionally, IGPS catalyzes the conversion of PRFAR and glutamine to IGP, AICAR and glutamate. The HisF subunit catalyzes the cyclization activity that produces IGP and AICAR from PRFAR using the ammonia provided by the HisH subunit. This chain is Imidazole glycerol phosphate synthase subunit HisF, found in Streptomyces griseus subsp. griseus (strain JCM 4626 / CBS 651.72 / NBRC 13350 / KCC S-0626 / ISP 5235).